A 363-amino-acid polypeptide reads, in one-letter code: Galanin receptor 2a (363 aa).

Residues 1–23 are Extracellular-facing; sequence MNASQQIHVFSSHWKVESVIISL. A helical transmembrane segment spans residues 24-44; sequence IFSMIFLVGTVGNCLVLAVLI. At 45 to 54 the chain is on the cytoplasmic side; sequence RNGQMNTKST. Residues 55 to 75 form a helical membrane-spanning segment; that stretch reads NLFILNLGLADLCFIVFCVPL. Residues 76 to 94 are Extracellular-facing; it reads QATIYTMDEWVFGAFVCKA. An intrachain disulfide couples Cys-92 to Cys-169. The chain crosses the membrane as a helical span at residues 95-115; that stretch reads VHFIIYLTMYASIFTLAAVSL. The Cytoplasmic segment spans residues 116–135; sequence DRYLAIRYPLRSRETRTPRN. Residues 136–156 form a helical membrane-spanning segment; sequence ALTSISLVWALSLFFSSPYLS. The Extracellular portion of the chain corresponds to 157 to 179; the sequence is YYQQMDLDGTTVCIPAWSVHHRQ. A helical transmembrane segment spans residues 180–200; the sequence is AMDICTFIFGYLIPVLILGIT. Residues 201 to 230 lie on the Cytoplasmic side of the membrane; sequence YARTIRYLWTSVDPMQDMSESRKAKRKVTK. Residues 231–251 form a helical membrane-spanning segment; that stretch reads MIIIVAVLFCLCWLPHHLVIL. The Extracellular portion of the chain corresponds to 252-268; that stretch reads CMWFGHFPLNHTTYVLR. Residues 269-289 traverse the membrane as a helical segment; the sequence is ILSHLVAYANSCLNPIVYALV. Topologically, residues 290–363 are cytoplasmic; the sequence is SKHFRKGFKK…TSAFMTFNVT (74 aa).

The protein belongs to the G-protein coupled receptor 1 family. In terms of tissue distribution, expressed in neurons in the ventral area of the interpeduncular nucleus (IPN) where expression often overlaps with spx1.

Its subcellular location is the membrane. In terms of biological role, receptor for the hormone galanin. Receptor for the hormones spexin-1 and spexin-2. In Danio rerio (Zebrafish), this protein is Galanin receptor 2a.